A 237-amino-acid chain; its full sequence is Maternal B9.10 protein (237 aa).

This sequence belongs to the BTG family.

This chain is Maternal B9.10 protein, found in Xenopus laevis (African clawed frog).